The primary structure comprises 640 residues: Calpain-5 (640 aa).

The Calpain catalytic domain maps to Leu-26–Ile-343. Catalysis depends on residues Cys-81, His-252, and Asn-284. Residues Asn-344 to Arg-496 are domain III. The region spanning Arg-499–Ser-617 is the C2 domain.

The protein belongs to the peptidase C2 family.

Its function is as follows. Calcium-regulated non-lysosomal thiol-protease. This chain is Calpain-5 (Capn5), found in Mus musculus (Mouse).